An 840-amino-acid polypeptide reads, in one-letter code: Protein translocase subunit SecA (840 aa).

Residues Q85, G103–T107, and D492 contribute to the ATP site. The segment at Q787–D821 is disordered. The span at D802–R819 shows a compositional bias: basic and acidic residues. Zn(2+) contacts are provided by C823, C825, C834, and C835.

The protein belongs to the SecA family. In terms of assembly, monomer and homodimer. Part of the essential Sec protein translocation apparatus which comprises SecA, SecYEG and auxiliary proteins SecDF. Other proteins may also be involved. Requires Zn(2+) as cofactor.

The protein resides in the cell membrane. It is found in the cytoplasm. The enzyme catalyses ATP + H2O + cellular proteinSide 1 = ADP + phosphate + cellular proteinSide 2.. Part of the Sec protein translocase complex. Interacts with the SecYEG preprotein conducting channel. Has a central role in coupling the hydrolysis of ATP to the transfer of proteins into and across the cell membrane, serving as an ATP-driven molecular motor driving the stepwise translocation of polypeptide chains across the membrane. In Clostridium perfringens (strain 13 / Type A), this protein is Protein translocase subunit SecA.